Consider the following 1693-residue polypeptide: uncharacterized protein (1693 aa).

WD repeat units lie at residues 1008-1042, 1053-1083, 1094-1124, 1135-1165, 1176-1206, 1217-1247, 1258-1288, 1299-1329, 1340-1370, 1381-1411, 1422-1452, 1463-1493, 1504-1534, 1545-1575, 1586-1616, and 1627-1657; these read HHEGPVTVLRISPSMENTPPLVLTATTNGIAYLWS, GHQEAITALDWSADGQYFATASADHTVKLWQ, GHEDWVRSVHFSPHHQFLVTSGQDNTARIWN, GHADWVRNAEFNCHGQILLTASRDGTARLWD, GHTSWVRNAQFSPDGQWIVTCSADGTARLWD, GHQNWVNNALWSPDGQHIITSSSDGTARVWS, GHDHNIHGARFSLDGQKIVTYSTDNTARLWT, GHQKEVYDADFSADGRFVFTVSADQTARQWD, GHSHWVRNAHFNPKGDRLLTVSRDKTARLWT, DHQGWVREGQFSPDGQWIVTGSADKTAQLWN, GHQDAVLNVRFSPDSQYIVTASKDGTARVWN, HYEKNIFAAEFSADGQFIVTASDDNTAGIWE, GHEGPVYFAQFSADSRYILTASVDNTARIWD, GHQSIVYQARFSPEGNLIATVSADHTARLWD, GHQGLVGTVDWSPDGQMLVTASNDGTARLWD, and GHGNWVRSAEFSPDGRWVLTSSADGTAKLWP.

This is an uncharacterized protein from Synechocystis sp. (strain ATCC 27184 / PCC 6803 / Kazusa).